A 294-amino-acid polypeptide reads, in one-letter code: Protoheme IX farnesyltransferase (294 aa).

9 consecutive transmembrane segments (helical) span residues 24 to 44, 48 to 68, 96 to 116, 118 to 138, 145 to 165, 172 to 192, 224 to 244, 245 to 265, and 268 to 288; these read VVLLMLLTVIVGMYLAAPGWV, LIAFTLLGIGLCAGSAAAINH, ALWFAVIIGLMGLSLLILFVN, LTALLTFVTLIGYAGVYTGYL, NIVIGGLAGAAPPLLGWTAVT, ALLLVLIIFTWTPPHFWALAI, VLLLVVSLLPFVVSMSGWIYL, LGALVLGIRFLVWAHKLYFTD, and VVAMQTFRFSILYLMLLFVFL.

Belongs to the UbiA prenyltransferase family. Protoheme IX farnesyltransferase subfamily.

It localises to the cell inner membrane. It catalyses the reaction heme b + (2E,6E)-farnesyl diphosphate + H2O = Fe(II)-heme o + diphosphate. The protein operates within porphyrin-containing compound metabolism; heme O biosynthesis; heme O from protoheme: step 1/1. Its function is as follows. Converts heme B (protoheme IX) to heme O by substitution of the vinyl group on carbon 2 of heme B porphyrin ring with a hydroxyethyl farnesyl side group. The polypeptide is Protoheme IX farnesyltransferase (Legionella pneumophila (strain Corby)).